We begin with the raw amino-acid sequence, 485 residues long: Noelin (485 aa).

An N-terminal signal peptide occupies residues 1–16; sequence MSVPLLKIGVVLSTMA. N-linked (GlcNAc...) asparagine glycans are attached at residues N33, N103, N187, N288, N307, N394, N431, and N473. Residues 87–227 adopt a coiled-coil conformation; that stretch reads RDARTKQLRQ…LRACMQKLAC (141 aa). In terms of domain architecture, Olfactomedin-like spans 226 to 478; it reads ACGKLTGISD…QTLYNVTLFH (253 aa). Residues C227 and C409 are joined by a disulfide bond. The Endoplasmic reticulum retention signal motif lies at 482 to 485; that stretch reads SDEL.

Homotetramer; disulfide-linked. Dimer of dimers, giving rise to a V-shaped homotretramer. Isoform 1 and isoform 3 interact with RTN4R. Identified in a complex with RTN4R and LINGO1. Peripherally associated with AMPAR complex. AMPAR complex consists of an inner core made of 4 pore-forming GluA/GRIA proteins (GRIA1, GRIA2, GRIA3 and GRIA4) and 4 major auxiliary subunits arranged in a twofold symmetry. One of the two pairs of distinct binding sites is occupied either by CNIH2, CNIH3 or CACNG2, CACNG3. The other harbors CACNG2, CACNG3, CACNG4, CACNG8 or GSG1L. This inner core of AMPAR complex is complemented by outer core constituents binding directly to the GluA/GRIA proteins at sites distinct from the interaction sites of the inner core constituents. Outer core constituents include at least PRRT1, PRRT2, CKAMP44/SHISA9, FRRS1L and NRN1. The proteins of the inner and outer core serve as a platform for other, more peripherally associated AMPAR constituents, including OLFM1. Alone or in combination, these auxiliary subunits control the gating and pharmacology of the AMPAR complex and profoundly impact their biogenesis and protein processing. Interacts with OLFM2. Interacts with DTNB. Expressed in the brain cortex, olfactory bulb and vomeronasal neuroepithelium (at protein level). Detected in brain cortex, hippocampus, dorsal root ganglion and olfactory bulb.

Its subcellular location is the secreted. The protein localises to the synapse. The protein resides in the endoplasmic reticulum. It is found in the cell projection. It localises to the axon. Its subcellular location is the perikaryon. In terms of biological role, contributes to the regulation of axonal growth in the embryonic and adult central nervous system by inhibiting interactions between RTN4R and LINGO1. Inhibits RTN4R-mediated axon growth cone collapse. May play an important role in regulating the production of neural crest cells by the neural tube. May be required for normal responses to olfactory stimuli. The protein is Noelin (Olfm1) of Mus musculus (Mouse).